We begin with the raw amino-acid sequence, 106 residues long: Thiosulfate sulfurtransferase GlpE (106 aa).

The 89-residue stretch at 17-105 folds into the Rhodanese domain; sequence EQSEAKLVDI…WQRAELPIVR (89 aa). Cys65 serves as the catalytic Cysteine persulfide intermediate.

Belongs to the GlpE family.

It localises to the cytoplasm. The catalysed reaction is thiosulfate + hydrogen cyanide = thiocyanate + sulfite + 2 H(+). It catalyses the reaction thiosulfate + [thioredoxin]-dithiol = [thioredoxin]-disulfide + hydrogen sulfide + sulfite + 2 H(+). Transferase that catalyzes the transfer of sulfur from thiosulfate to thiophilic acceptors such as cyanide or dithiols. May function in a CysM-independent thiosulfate assimilation pathway by catalyzing the conversion of thiosulfate to sulfite, which can then be used for L-cysteine biosynthesis. In Vibrio campbellii (strain ATCC BAA-1116), this protein is Thiosulfate sulfurtransferase GlpE.